The sequence spans 947 residues: Serine/threonine-protein kinase PKH2 (947 aa).

Basic residues predominate over residues 1 to 14; that stretch reads MHKFRYSLHQHYSK. Disordered stretches follow at residues 1-43, 108-132, and 162-212; these read MHKF…SSSS, SLGN…LSSH, and FNHL…NEEN. A compositionally biased stretch (polar residues) spans 108-117; it reads SLGNTTNETG. A compositionally biased stretch (acidic residues) spans 187-198; that stretch reads NTEEEENNDDTD. Residues 199 to 212 show a composition bias toward basic and acidic residues; the sequence is EIPKSETLKQNEEN. The Protein kinase domain occupies 240–502; that stretch reads FKFGKELGEG…IPEIQKHYFF (263 aa). Residues 250 to 252 and Lys269 each bind ATP; that span reads SYS. Residues 271-316 form a PIF-pocket region; that stretch reads LDKRHIIKEKKVKYVNIEKHALNRLSNRLGVISLYFTFQDKDSLYF. ATP-binding positions include 319–321 and Glu325; that span reads DYA. The Proton acceptor role is filled by Asp364. The ATP site is built by Glu368 and Asp382. 2 stretches are compositionally biased toward low complexity: residues 550–579 and 618–632; these read VKKS…KGSS and SSTS…SNSN. Disordered regions lie at residues 550–598, 611–644, 660–686, and 794–816; these read VKKS…STEK, KPAT…QQDY, SVGS…IHQQ, and NMKR…ASTS. Over residues 802 to 811 the composition is skewed to basic and acidic residues; sequence DSKKSMDIER.

It belongs to the protein kinase superfamily. AGC Ser/Thr protein kinase family. PDPK1 subfamily.

The protein localises to the nucleus. The protein resides in the cytoplasm. Its subcellular location is the cell cortex. The catalysed reaction is L-seryl-[protein] + ATP = O-phospho-L-seryl-[protein] + ADP + H(+). It carries out the reaction L-threonyl-[protein] + ATP = O-phospho-L-threonyl-[protein] + ADP + H(+). Functionally, serine/threonine-protein kinase which is part sphingolipid-mediated signaling pathway that is required for the internalization step of endocytosis by regulating eisosome assembly and organization, and modulating the organization of the plasma membrane. Phosphorylates and activates PKC1. Activates YPK1 and YPK2, 2 components of signaling cascade required for maintenance of cell wall integrity. Required for stress-induced P-body assembly and regulates global mRNA decay at the deadenylation step. This is Serine/threonine-protein kinase PKH2 from Candida albicans (strain SC5314 / ATCC MYA-2876) (Yeast).